The primary structure comprises 888 residues: Autophagy-related protein 9 (888 aa).

The tract at residues 1 to 170 (MASNIFSRIK…PYTTPMGPQP (170 aa)) is disordered. At 1-255 (MASNIFSRIK…CTRKMSGLWN (255 aa)) the chain is on the cytoplasmic side. Polar residues predominate over residues 13–24 (SGGSQSFYQQLR). Residues 28–38 (DPEYDPGLDEE) are compositionally biased toward acidic residues. Residues 123-143 (RATNPGSSRTPASVGPSSART) show a composition bias toward polar residues. A helical membrane pass occupies residues 256 to 276 (FAIWLYTFFFIWKCVQYFVEI). The Lumenal portion of the chain corresponds to 277–422 (RRLTYIRDFY…RLLSQKLRQR (146 aa)). Residues 423 to 443 (FLFAGFLNLLFAPVVLAYVVI) traverse the membrane as a helical segment. Topologically, residues 444–511 (VYFFTYYYEY…PKRITEAVAR (68 aa)) are cytoplasmic. Residues 512-532 (TIAFMSGAITAILAIGSVLDS) lie within the membrane without spanning it. Over 533 to 544 (ELFLNFEITKDR) the chain is Cytoplasmic. The chain crosses the membrane as a helical span at residues 545-565 (PVIFYLGVFAAIWATTRGMVS). Topologically, residues 566-611 (EETLVFNPEYALRNVIEYTRYVPDHWKNKLHSSEVKQEFSELYKMK) are lumenal. A helical transmembrane segment spans residues 612 to 632 (VVIFLEEMMGIVTTPMLLLFS). The Cytoplasmic segment spans residues 633-642 (LPRCSDQIVD). Residues 643-663 (FFREFTIHVDGLGYVCSFAVF) lie within the membrane without spanning it. Residues 664–888 (DFQKGPGNTG…QRPRRGGGMV (225 aa)) are Cytoplasmic-facing. Disordered stretches follow at residues 748–770 (GRTG…PRIG) and 834–866 (EPGG…DPEA).

It belongs to the ATG9 family. As to quaternary structure, homotrimer; forms a homotrimer with a central pore that forms a path between the two membrane leaflets. In terms of processing, phosphorylated by ATG1. ATG1 phosphorylation is required for ATG18 interaction and preautophagosome elongation.

It localises to the preautophagosomal structure membrane. Its subcellular location is the cytoplasmic vesicle membrane. The protein localises to the golgi apparatus membrane. It is found in the endoplasmic reticulum membrane. The catalysed reaction is a 1,2-diacyl-sn-glycero-3-phosphocholine(in) = a 1,2-diacyl-sn-glycero-3-phosphocholine(out). It catalyses the reaction a 1,2-diacyl-sn-glycero-3-phospho-L-serine(in) = a 1,2-diacyl-sn-glycero-3-phospho-L-serine(out). The enzyme catalyses a 1,2-diacyl-sn-glycero-3-phosphoethanolamine(in) = a 1,2-diacyl-sn-glycero-3-phosphoethanolamine(out). It carries out the reaction a 1,2-diacyl-sn-glycero-3-phospho-(1D-myo-inositol-3-phosphate)(in) = a 1,2-diacyl-sn-glycero-3-phospho-(1D-myo-inositol-3-phosphate)(out). In terms of biological role, phospholipid scramblase involved in autophagy and cytoplasm to vacuole transport (Cvt) vesicle formation. Cycles between the preautophagosomal structure/phagophore assembly site (PAS) and the cytoplasmic vesicle pool and supplies membrane for the growing autophagosome. Lipid scramblase activity plays a key role in preautophagosomal structure/phagophore assembly by distributing the phospholipids that arrive through ATG2 from the cytoplasmic to the luminal leaflet of the bilayer, thereby driving autophagosomal membrane expansion. Required for mitophagy. Also involved in endoplasmic reticulum-specific autophagic process and is essential for the survival of cells subjected to severe ER stress. Different machineries are required for anterograde trafficking to the PAS during either the Cvt pathway or bulk autophagy and for retrograde trafficking. Autophagy is required for proper vegetative growth, asexual/sexual reproduction, and full virulence. Autophagy is particularly involved in the biosynthesis of deoxynivalenol (DON), an important virulence determinant. Required for aerial hyphae development and lipid droplet degradation in response to starvation. This Gibberella zeae (strain ATCC MYA-4620 / CBS 123657 / FGSC 9075 / NRRL 31084 / PH-1) (Wheat head blight fungus) protein is Autophagy-related protein 9.